A 682-amino-acid polypeptide reads, in one-letter code: Cyclic nucleotide-gated cation channel (682 aa).

Positions 1 to 41 (MTGQAALERSVSSHRLSVRSRLEGEAERAESAISRTDGDDD) are disordered. Residues 1 to 136 (MTGQAALERS…EGFVVSQSDD (136 aa)) are Cytoplasmic-facing. A compositionally biased stretch (basic and acidic residues) spans 20–30 (SRLEGEAERAE). A helical transmembrane segment spans residues 137–157 (IYYYWLFFIALASLYNWIMLV). The Extracellular segment spans residues 158–169 (ARACFDQLQDEN). Residues 170 to 190 (FFLWVGLDYLCDVIYILDTCI) traverse the membrane as a helical segment. Over 191–218 (RLRTGYLEQGLLVKDLAKLRDNYIRTLQ) the chain is Cytoplasmic. A helical membrane pass occupies residues 219 to 239 (FKLDFLSILPTELLFFVTGYV). Over 240–272 (PQLRFNRLLRFSRMFEFFDRTETRTNYPNAFRI) the chain is Extracellular. Residues 273-293 (CNLILYILVIIHWNACIYYAI) form a helical membrane-spanning segment. The Cytoplasmic segment spans residues 294–311 (SKALGLSSDTWVYSGQNK). A helical transmembrane segment spans residues 312–332 (TLSFCYVYCFYWSTLTLTTIG). The Extracellular portion of the chain corresponds to 333 to 343 (EMPPPVKDEEY). Residues 344-364 (VFVVFDFLVGVLIFATIVGNV) form a helical membrane-spanning segment. Over 365 to 682 (GSMIANMNAT…SAETNSEEET (318 aa)) the chain is Cytoplasmic. Residues 455–577 (LLVE…QGLL), Glu-514, and Arg-529 contribute to the 3',5'-cyclic AMP site. Residues 649 to 682 (GEHAGVPTHTHADIHAQPETHTRTSAETNSEEET) form a disordered region. Positions 658–672 (THADIHAQPETHTRT) are enriched in basic and acidic residues.

This sequence belongs to the cyclic nucleotide-gated cation channel (TC 1.A.1.5) family. Olfactory neurons.

The protein localises to the membrane. This cyclic nucleotide-gated channel is activated equally well by both cAMP and cGMP. In Ictalurus punctatus (Channel catfish), this protein is Cyclic nucleotide-gated cation channel.